We begin with the raw amino-acid sequence, 106 residues long: MSKAQRMRIKLKSFDYKLLDQSARKIVETAKSTGAEVSGPVPLPTDREVITIIRAPHKYKDSREQFEIKTHKRLIDIIKPTQKTVDALMRVELPAGVDIEIKLKEV.

Belongs to the universal ribosomal protein uS10 family. Part of the 30S ribosomal subunit.

In terms of biological role, involved in the binding of tRNA to the ribosomes. This Caldicellulosiruptor saccharolyticus (strain ATCC 43494 / DSM 8903 / Tp8T 6331) protein is Small ribosomal subunit protein uS10.